We begin with the raw amino-acid sequence, 224 residues long: Small ribosomal subunit protein uS3 (224 aa).

The KH type-2 domain occupies 39–107 (IREFLKKKPS…DVWVEIAEVK (69 aa)).

This sequence belongs to the universal ribosomal protein uS3 family. In terms of assembly, part of the 30S ribosomal subunit. Forms a tight complex with proteins S10 and S14.

Binds the lower part of the 30S subunit head. Binds mRNA in the 70S ribosome, positioning it for translation. This Chlamydia trachomatis serovar D (strain ATCC VR-885 / DSM 19411 / UW-3/Cx) protein is Small ribosomal subunit protein uS3.